A 586-amino-acid polypeptide reads, in one-letter code: Glutathione/L-cysteine transport system ATP-binding/permease protein CydD (586 aa).

6 helical membrane passes run 28 to 48 (IVLA…LATL), 62 to 82 (LIPY…ILWA), 146 to 166 (LSAI…WAAG), 167 to 187 (LILM…GIAA), 250 to 270 (SAVL…YFGF), and 278 to 298 (FGTY…ILAP). Positions 28–316 (IVLATLSSFI…LGTYYHDRAA (289 aa)) constitute an ABC transmembrane type-1 domain. Residues 350-581 (ISAENLVVLS…GFFAELLAQR (232 aa)) enclose the ABC transporter domain. 383–390 (GQSGAGKT) is an ATP binding site.

The protein belongs to the ABC transporter superfamily. Cysteine exporter (TC 3.A.1.129.1) family. As to quaternary structure, forms a heterodimer with CydC.

The protein resides in the cell inner membrane. It carries out the reaction L-cysteine(in) + ATP + H2O = L-cysteine(out) + ADP + phosphate + H(+). The catalysed reaction is glutathione(in) + ATP + H2O = glutathione(out) + ADP + phosphate + H(+). Its function is as follows. Part of the ABC transporter complex CydDC that exports the reduced low-molecular-weight thiols cysteine and glutathione to the periplasm. Export of these thiol-containing redox-active molecules may be crucial for redox homeostasis in the periplasm, permitting correct assembly of various respiratory complexes and formation of correct disulfide bonds in periplasmic and secreted proteins. CydD contains transmembrane domains (TMD), which form a pore in the inner membrane, and an ATP-binding domain (NBD), which is responsible for energy generation. Required for the assembly of functional cytochrome bd-type quinol oxidases and periplasmic c-type cytochromes. The protein is Glutathione/L-cysteine transport system ATP-binding/permease protein CydD (cydD) of Haemophilus influenzae (strain ATCC 51907 / DSM 11121 / KW20 / Rd).